The primary structure comprises 470 residues: Poly(A) polymerase catalytic subunit (470 aa).

Catalysis depends on residues Asp192 and Asp194.

The protein belongs to the poxviridae poly(A) polymerase catalytic subunit family. Heterodimer of a large (catalytic) subunit and a small (regulatory) subunit.

It catalyses the reaction RNA(n) + ATP = RNA(n)-3'-adenine ribonucleotide + diphosphate. Functionally, polymerase that creates the 3'-poly(A) tail of mRNA's. The polypeptide is Poly(A) polymerase catalytic subunit (PAPL) (Sus scrofa (Pig)).